The sequence spans 394 residues: Elongation factor Tu (394 aa).

Residues 10–204 (KTHLNVGTIG…TLDTYIEDPV (195 aa)) enclose the tr-type G domain. A G1 region spans residues 19-26 (GHVDHGKT). 19 to 26 (GHVDHGKT) provides a ligand contact to GTP. T26 serves as a coordination point for Mg(2+). A G2 region spans residues 60–64 (GITIK). Positions 81-84 (DCPG) are G3. Residues 81–85 (DCPGH) and 136–139 (NKCD) contribute to the GTP site. Positions 136–139 (NKCD) are G4. The tract at residues 174–176 (SAL) is G5.

It belongs to the TRAFAC class translation factor GTPase superfamily. Classic translation factor GTPase family. EF-Tu/EF-1A subfamily. Monomer.

Its subcellular location is the cytoplasm. It carries out the reaction GTP + H2O = GDP + phosphate + H(+). GTP hydrolase that promotes the GTP-dependent binding of aminoacyl-tRNA to the A-site of ribosomes during protein biosynthesis. This is Elongation factor Tu from Aster yellows witches'-broom phytoplasma (strain AYWB).